The primary structure comprises 302 residues: 4-hydroxy-tetrahydrodipicolinate synthase (302 aa).

Thr-55 contributes to the pyruvate binding site. Tyr-144 serves as the catalytic Proton donor/acceptor. Lys-172 functions as the Schiff-base intermediate with substrate in the catalytic mechanism. Val-214 contributes to the pyruvate binding site.

This sequence belongs to the DapA family. Homotetramer; dimer of dimers.

The protein localises to the cytoplasm. The enzyme catalyses L-aspartate 4-semialdehyde + pyruvate = (2S,4S)-4-hydroxy-2,3,4,5-tetrahydrodipicolinate + H2O + H(+). It functions in the pathway amino-acid biosynthesis; L-lysine biosynthesis via DAP pathway; (S)-tetrahydrodipicolinate from L-aspartate: step 3/4. Functionally, catalyzes the condensation of (S)-aspartate-beta-semialdehyde [(S)-ASA] and pyruvate to 4-hydroxy-tetrahydrodipicolinate (HTPA). This Synechococcus sp. (strain CC9311) protein is 4-hydroxy-tetrahydrodipicolinate synthase.